The following is a 231-amino-acid chain: Ribosomal RNA small subunit methyltransferase G (231 aa).

3 residues coordinate S-adenosyl-L-methionine: Gly-85, Phe-90, and Arg-154.

Belongs to the methyltransferase superfamily. RNA methyltransferase RsmG family.

It localises to the cytoplasm. It carries out the reaction guanosine(527) in 16S rRNA + S-adenosyl-L-methionine = N(7)-methylguanosine(527) in 16S rRNA + S-adenosyl-L-homocysteine. Its function is as follows. Specifically methylates the N7 position of guanine in position 527 of 16S rRNA. In Rhodopseudomonas palustris (strain BisA53), this protein is Ribosomal RNA small subunit methyltransferase G.